Consider the following 501-residue polypeptide: Chromosomal replication initiator protein DnaA (501 aa).

Residues 1 to 90 form a domain I, interacts with DnaA modulators region; the sequence is MSVELWQQCV…KRSSAPRAAP (90 aa). Residues 91–164 form a domain II region; it reads NAPLAAAASQ…QVEGALKHTS (74 aa). Residues 103–121 are compositionally biased toward low complexity; sequence AAPVASTPAPAPSKSSAKK. Residues 103 to 150 form a disordered region; sequence AAPVASTPAPAPSKSSAKKNAAENEEPSRDSFDPMAGASSQQAPIRAE. Residues 122–134 show a composition bias toward basic and acidic residues; it reads NAAENEEPSRDSF. The interval 165 to 381 is domain III, AAA+ region; it reads YLNRTFTFEN…GALKRVIAHS (217 aa). The ATP site is built by Gly-209, Gly-211, Lys-212, and Thr-213. Residues 382-501 form a domain IV, binds dsDNA region; it reads HFMGRDITIE…YKNLLRTLTT (120 aa).

This sequence belongs to the DnaA family. In terms of assembly, oligomerizes as a right-handed, spiral filament on DNA at oriC.

It is found in the cytoplasm. Functionally, plays an essential role in the initiation and regulation of chromosomal replication. ATP-DnaA binds to the origin of replication (oriC) to initiate formation of the DNA replication initiation complex once per cell cycle. Binds the DnaA box (a 9 base pair repeat at the origin) and separates the double-stranded (ds)DNA. Forms a right-handed helical filament on oriC DNA; dsDNA binds to the exterior of the filament while single-stranded (ss)DNA is stabiized in the filament's interior. The ATP-DnaA-oriC complex binds and stabilizes one strand of the AT-rich DNA unwinding element (DUE), permitting loading of DNA polymerase. After initiation quickly degrades to an ADP-DnaA complex that is not apt for DNA replication. Binds acidic phospholipids. The sequence is that of Chromosomal replication initiator protein DnaA from Pseudomonas fluorescens (strain SBW25).